The following is a 452-amino-acid chain: D-inositol 3-phosphate glycosyltransferase (452 aa).

His25 contacts 1D-myo-inositol 3-phosphate. UDP-N-acetyl-alpha-D-glucosamine-binding positions include 31 to 32 (QP) and Gly39. Residues 36–41 (DAGGMN), Lys94, Tyr127, Thr151, and Arg171 contribute to the 1D-myo-inositol 3-phosphate site. UDP-N-acetyl-alpha-D-glucosamine-binding residues include Arg245, Lys250, and Gln309. 3 residues coordinate Mg(2+): Tyr318, Arg319, and Ser321. UDP-N-acetyl-alpha-D-glucosamine is bound by residues Glu331 and Glu339. Thr345 serves as a coordination point for Mg(2+).

This sequence belongs to the glycosyltransferase group 1 family. MshA subfamily. As to quaternary structure, homodimer.

It catalyses the reaction 1D-myo-inositol 3-phosphate + UDP-N-acetyl-alpha-D-glucosamine = 1D-myo-inositol 2-acetamido-2-deoxy-alpha-D-glucopyranoside 3-phosphate + UDP + H(+). Functionally, catalyzes the transfer of a N-acetyl-glucosamine moiety to 1D-myo-inositol 3-phosphate to produce 1D-myo-inositol 2-acetamido-2-deoxy-glucopyranoside 3-phosphate in the mycothiol biosynthesis pathway. This Rhodococcus jostii (strain RHA1) protein is D-inositol 3-phosphate glycosyltransferase.